A 459-amino-acid chain; its full sequence is MESSNLGGGGGGGGGGGPPPFLIKTYEMVEDAATNHVVSWGPGGASFVVWNPLDFSRDLLPKYFKHNNFSSFIRQLNTYGFRKIDPERWEFANEDFIRGHTHLLKNIHRRKPVHSHSLQNQINGPLAESERRELEEEINRLKYEKSILVADLQRQNQQQYVINWQMQAMEGRLVAMEQRQKNIVASLCEMLQRRGGAVSSSLLESDHFSKKRRVPKMDLFVDDCAAGEEQKVFQFQGIGTDAPAMPPVLPVTNGEAFDRVELSLVSLEKLFQRANDACTAAEEMYSHGHGGTEPSTAICPEEMNTAPMETGIDLQLPASLHPSSPNTGNAHLHLSTELTESPGFVQSPELPMAEIREDIHVTRYPTQADVNSEIASSTDTSQDGTSETEASHGPTNDVFWERFLTETPRSCLDESERQESPKDDVKAELGCNGFHHREKVDQITEQMGHLASAEQTLHT.

Residues 127–189 (AESERRELEE…QKNIVASLCE (63 aa)) adopt a coiled-coil conformation. The segment at 141–191 (LKYEKSILVADLQRQNQQQYVINWQMQAMEGRLVAMEQRQKNIVASLCEML) is hydrophobic repeat HR-A/B. A Nuclear localization signal motif is present at residues 209-213 (SKKRR). The segment covering 364–388 (YPTQADVNSEIASSTDTSQDGTSET) has biased composition (polar residues). Residues 364-398 (YPTQADVNSEIASSTDTSQDGTSETEASHGPTNDV) form a disordered region. The AHA signature appears at 397–406 (DVFWERFLTE).

It belongs to the HSF family. Class A subfamily. Homotrimer. Exhibits temperature-dependent phosphorylation.

It localises to the nucleus. Its function is as follows. Transcriptional regulator that specifically binds DNA of heat shock promoter elements (HSE). The sequence is that of Heat stress transcription factor A-4d (HSFA4D) from Oryza sativa subsp. japonica (Rice).